The sequence spans 92 residues: Small ribosomal subunit protein uS19 (92 aa).

Belongs to the universal ribosomal protein uS19 family.

Its function is as follows. Protein S19 forms a complex with S13 that binds strongly to the 16S ribosomal RNA. This Prochlorococcus marinus (strain MIT 9301) protein is Small ribosomal subunit protein uS19.